We begin with the raw amino-acid sequence, 370 residues long: CST complex subunit STN1 (370 aa).

Residues 1-187 (MESNSSQCED…KVYDQPFHSP (187 aa)) form an interaction with CTC1 region. Positions 57 to 157 (VDILGTVIGV…EIHATTYYKV (101 aa)) form a DNA-binding region, OB. 2 winged helix-turn-helix (wHTH) regions span residues 193–297 (EALS…YVTR) and 298–370 (EDKE…YTAF).

The protein belongs to the STN1 family. In terms of assembly, component of the CST complex, composed of TEN1/C17orf106, CTC1/C17orf68 and STN1; in the complex interacts directly with TEN1 and CTC1. Interacts with ACD/TPP1, POT1 and POLA1.

The protein resides in the nucleus. The protein localises to the chromosome. Its subcellular location is the telomere. Its function is as follows. Component of the CST complex proposed to act as a specialized replication factor promoting DNA replication under conditions of replication stress or natural replication barriers such as the telomere duplex. The CST complex binds single-stranded DNA with high affinity in a sequence-independent manner, while isolated subunits bind DNA with low affinity by themselves. Initially the CST complex has been proposed to protect telomeres from DNA degradation. However, the CST complex has been shown to be involved in several aspects of telomere replication. The CST complex inhibits telomerase and is involved in telomere length homeostasis; it is proposed to bind to newly telomerase-synthesized 3' overhangs and to terminate telomerase action implicating the association with the ACD:POT1 complex thus interfering with its telomerase stimulation activity. The CST complex is also proposed to be involved in fill-in synthesis of the telomeric C-strand probably implicating recruitment and activation of DNA polymerase alpha. The CST complex facilitates recovery from many forms of exogenous DNA damage; seems to be involved in the re-initiation of DNA replication at repaired forks and/or dormant origins. Required for efficicient replication of the duplex region of the telomere. Promotes efficient replication of lagging-strand telomeres. Promotes general replication start following replication-fork stalling implicating new origin firing. May be in involved in C-strand fill-in during late S/G2 phase independent of its role in telomere duplex replication. The chain is CST complex subunit STN1 from Bos taurus (Bovine).